A 342-amino-acid polypeptide reads, in one-letter code: Holliday junction branch migration complex subunit RuvB (342 aa).

Residues 1 to 182 (MRIEALNTAP…FGINSRLDYY (182 aa)) form a large ATPase domain (RuvB-L) region. ATP is bound by residues isoleucine 21, arginine 22, glycine 63, lysine 66, threonine 67, threonine 68, 129–131 (EDY), arginine 172, tyrosine 182, and arginine 219. Threonine 67 is a binding site for Mg(2+). A small ATPAse domain (RuvB-S) region spans residues 183–253 (SPELLQSIIV…VARRTLESLE (71 aa)). The segment at 256-342 (EGGLDDMDKK…DHGPLFDHNS (87 aa)) is head domain (RuvB-H). Residues arginine 311 and arginine 316 each contribute to the DNA site.

Belongs to the RuvB family. As to quaternary structure, homohexamer. Forms an RuvA(8)-RuvB(12)-Holliday junction (HJ) complex. HJ DNA is sandwiched between 2 RuvA tetramers; dsDNA enters through RuvA and exits via RuvB. An RuvB hexamer assembles on each DNA strand where it exits the tetramer. Each RuvB hexamer is contacted by two RuvA subunits (via domain III) on 2 adjacent RuvB subunits; this complex drives branch migration. In the full resolvosome a probable DNA-RuvA(4)-RuvB(12)-RuvC(2) complex forms which resolves the HJ.

The protein resides in the cytoplasm. The enzyme catalyses ATP + H2O = ADP + phosphate + H(+). Functionally, the RuvA-RuvB-RuvC complex processes Holliday junction (HJ) DNA during genetic recombination and DNA repair, while the RuvA-RuvB complex plays an important role in the rescue of blocked DNA replication forks via replication fork reversal (RFR). RuvA specifically binds to HJ cruciform DNA, conferring on it an open structure. The RuvB hexamer acts as an ATP-dependent pump, pulling dsDNA into and through the RuvAB complex. RuvB forms 2 homohexamers on either side of HJ DNA bound by 1 or 2 RuvA tetramers; 4 subunits per hexamer contact DNA at a time. Coordinated motions by a converter formed by DNA-disengaged RuvB subunits stimulates ATP hydrolysis and nucleotide exchange. Immobilization of the converter enables RuvB to convert the ATP-contained energy into a lever motion, pulling 2 nucleotides of DNA out of the RuvA tetramer per ATP hydrolyzed, thus driving DNA branch migration. The RuvB motors rotate together with the DNA substrate, which together with the progressing nucleotide cycle form the mechanistic basis for DNA recombination by continuous HJ branch migration. Branch migration allows RuvC to scan DNA until it finds its consensus sequence, where it cleaves and resolves cruciform DNA. The polypeptide is Holliday junction branch migration complex subunit RuvB (Chlorobaculum parvum (strain DSM 263 / NCIMB 8327) (Chlorobium vibrioforme subsp. thiosulfatophilum)).